Consider the following 160-residue polypeptide: Nucleotide-binding protein MADE_1020535 (160 aa).

It belongs to the YajQ family.

Its function is as follows. Nucleotide-binding protein. This Alteromonas mediterranea (strain DSM 17117 / CIP 110805 / LMG 28347 / Deep ecotype) protein is Nucleotide-binding protein MADE_1020535.